The following is a 299-amino-acid chain: Bifunctional protein FolD (299 aa).

Residues Gly169–Ser171, Ser194, and Ile235 contribute to the NADP(+) site.

The protein belongs to the tetrahydrofolate dehydrogenase/cyclohydrolase family. Homodimer.

It carries out the reaction (6R)-5,10-methylene-5,6,7,8-tetrahydrofolate + NADP(+) = (6R)-5,10-methenyltetrahydrofolate + NADPH. The catalysed reaction is (6R)-5,10-methenyltetrahydrofolate + H2O = (6R)-10-formyltetrahydrofolate + H(+). Its pathway is one-carbon metabolism; tetrahydrofolate interconversion. Its function is as follows. Catalyzes the oxidation of 5,10-methylenetetrahydrofolate to 5,10-methenyltetrahydrofolate and then the hydrolysis of 5,10-methenyltetrahydrofolate to 10-formyltetrahydrofolate. In Nostoc sp. (strain PCC 7120 / SAG 25.82 / UTEX 2576), this protein is Bifunctional protein FolD.